The chain runs to 124 residues: CD59 glycoprotein (124 aa).

The N-terminal stretch at 1 to 24 is a signal peptide; that stretch reads MTSRGVHLLLRLLFLLAVFYSSDS. The UPAR/Ly6 domain maps to 25-101; that stretch reads SLMCYHCLLP…DLCNGPEDDG (77 aa). 5 cysteine pairs are disulfide-bonded: cysteine 28–cysteine 51, cysteine 31–cysteine 38, cysteine 44–cysteine 64, cysteine 70–cysteine 88, and cysteine 89–cysteine 94. An N-linked (GlcNAc...) asparagine glycan is attached at asparagine 37. Glycine 101 is lipidated: GPI-anchor amidated glycine. The propeptide at 102 to 124 is removed in mature form; sequence TALTGRTVLLVAPLLAAARNLCL.

Interacts with T-cell surface antigen CD2. In terms of processing, N- and O-glycosylated.

The protein localises to the cell membrane. It localises to the secreted. Its function is as follows. Potent inhibitor of the complement membrane attack complex (MAC) action, which protects self-cells from damage during complement activation. Acts by binding to the beta-haipins of C8 (C8A and C8B) components of the assembling MAC, forming an intermolecular beta-sheet that prevents incorporation of the multiple copies of C9 required for complete formation of the osmolytic pore. In Oryctolagus cuniculus (Rabbit), this protein is CD59 glycoprotein.